Consider the following 377-residue polypeptide: MTLDLIKIRRDLHQIPEIGLEEFKTQAYLLERIAEMTEGKDFVEQRTWRTGILVFLHGSAPEKTIGWRTDIDGLPIVEETGLDFKSIHEGRMHACGHDIHMTTALGLLDQMLQVQPKNNMLFLFQPAEENEAGGMLMYEDGAFGDWLPDEFYGLHVRPDFKVGDIATNTNTLFAGTCEVLVTFKGKGGHAAFPHEANDALVAASYFITQVQTIVSRNVDPIQGGVVTFGSFHAGTTNNVIAETAEVYGTIRTLTQEMSLLIQKRVRQIAEGVAASFGMEVDIMLKQGGYLPVENNPALAKELMAFFDASPAVNLIDCLPAMTGEDFGYLLSKVPGVMFWLGIDTPYALHHPKMSPNEEALAFAVSEIGKFLKYKAED.

Asp-70 is an active-site residue. Glu-129 acts as the Proton acceptor in catalysis.

The protein belongs to the peptidase M20A family. N-acetyldiaminopimelate deacetylase subfamily.

It carries out the reaction N-acetyl-(2S,6S)-2,6-diaminopimelate + H2O = (2S,6S)-2,6-diaminopimelate + acetate. It participates in amino-acid biosynthesis; L-lysine biosynthesis via DAP pathway; LL-2,6-diaminopimelate from (S)-tetrahydrodipicolinate (acetylase route): step 3/3. Its function is as follows. Catalyzes the conversion of N-acetyl-diaminopimelate to diaminopimelate and acetate. The protein is N-acetyldiaminopimelate deacetylase of Streptococcus thermophilus (strain CNRZ 1066).